Here is a 578-residue protein sequence, read N- to C-terminus: Rhoptry protein 4 (578 aa).

The signal sequence occupies residues 1–33; it reads MGHPTSFGQPSCLVWLAAAFLVLGLCLVQQGAG. The segment at 56 to 82 is disordered; that stretch reads VDKYSRDSTEGENTVSEGEAEGSRGGS. Residues 259-546 enclose the Protein kinase domain; sequence LVRGRRIGLF…ALQAIETPEY (288 aa). The interval 559 to 578 is disordered; the sequence is LYSGDGTLTGGDDDMPPLET. Over residues 569–578 the composition is skewed to acidic residues; the sequence is GDDDMPPLET.

Phosphorylated on multiple serine and threonine residues in parasitic extracts and infected cells but not in extracellular parasites.

The protein localises to the secreted. Its subcellular location is the parasitophorous vacuole membrane. Its function is as follows. Thought to play a role in parasitophorous vacuole membrane function during the infection of host organisms. In Toxoplasma gondii, this protein is Rhoptry protein 4.